The following is a 706-amino-acid chain: Septin ring organizing protein mid2 (706 aa).

Disordered regions lie at residues 62-102 and 145-180; these read STAP…PFST and DEAS…KKNP. Composition is skewed to polar residues over residues 81 to 90 and 149 to 169; these read YDQTLSNSSS and NKSS…SNQG. Ser-379 carries the post-translational modification Phosphoserine. A PH domain is found at 583-688; that stretch reads TLLCDGYLCQ…WMSTLRQHLG (106 aa).

The protein belongs to the BUD4 family.

The protein resides in the cytoplasm. It localises to the cell cortex. It is found in the cytoskeleton. Responsible for the proper stability and function of septins during cytokinesis. Required for the correct formation of the medial septin ring structure in mitosis and for the proper localization of endo-glucanases agn1 and eng1, which are needed for efficient cell separation. May act as a landmark for the localization of hydrolytic proteins to the medial region. In Schizosaccharomyces pombe (strain 972 / ATCC 24843) (Fission yeast), this protein is Septin ring organizing protein mid2 (mid2).